The following is a 153-amino-acid chain: Ribosomal RNA large subunit methyltransferase H (153 aa).

Residues Leu-70, Gly-102, and Leu-121–Phe-126 each bind S-adenosyl-L-methionine.

This sequence belongs to the RNA methyltransferase RlmH family. As to quaternary structure, homodimer.

The protein resides in the cytoplasm. It carries out the reaction pseudouridine(1915) in 23S rRNA + S-adenosyl-L-methionine = N(3)-methylpseudouridine(1915) in 23S rRNA + S-adenosyl-L-homocysteine + H(+). Specifically methylates the pseudouridine at position 1915 (m3Psi1915) in 23S rRNA. The sequence is that of Ribosomal RNA large subunit methyltransferase H from Geotalea uraniireducens (strain Rf4) (Geobacter uraniireducens).